The chain runs to 79 residues: Submaxillary gland androgen-regulated protein 3B (79 aa).

The first 22 residues, 1–22 (MKSLTWILGLWALAACFTPGES), serve as a signal peptide directing secretion. Positions 19–79 (PGESQRGPRG…GIFPPPPPQP (61 aa)) are disordered. Position 23 is a pyrrolidone carboxylic acid (Gln23). A compositionally biased stretch (pro residues) spans 28–79 (GPYPPGPLAPPQPFGPGFVPPPPPPPYGPGRIPPPPPAPYGPGIFPPPPPQP).

Belongs to the PROL1/PROL3 family. In terms of processing, P-A and D1A are probably degradation products of P-B. Secreted into saliva by submaxillary gland. Not expressed in heart, brain, lung, liver, skeletal muscle, Kidney, pancreas or placenta.

Its subcellular location is the secreted. This is Submaxillary gland androgen-regulated protein 3B (SMR3B) from Homo sapiens (Human).